A 100-amino-acid polypeptide reads, in one-letter code: Small ribosomal subunit protein uS14c (100 aa).

The protein belongs to the universal ribosomal protein uS14 family. In terms of assembly, part of the 30S ribosomal subunit.

Its subcellular location is the plastid. It is found in the chloroplast. In terms of biological role, binds 16S rRNA, required for the assembly of 30S particles. The protein is Small ribosomal subunit protein uS14c of Lactuca sativa (Garden lettuce).